Reading from the N-terminus, the 172-residue chain is Shikimate kinase (172 aa).

Residue 14-19 (GAGKST) coordinates ATP. Residue Ser-18 coordinates Mg(2+). Positions 36, 60, and 82 each coordinate substrate. Arg-120 lines the ATP pocket. Arg-140 contacts substrate. Gln-157 serves as a coordination point for ATP.

This sequence belongs to the shikimate kinase family. As to quaternary structure, monomer. Mg(2+) is required as a cofactor.

It localises to the cytoplasm. It catalyses the reaction shikimate + ATP = 3-phosphoshikimate + ADP + H(+). The protein operates within metabolic intermediate biosynthesis; chorismate biosynthesis; chorismate from D-erythrose 4-phosphate and phosphoenolpyruvate: step 5/7. In terms of biological role, catalyzes the specific phosphorylation of the 3-hydroxyl group of shikimic acid using ATP as a cosubstrate. The protein is Shikimate kinase of Colwellia psychrerythraea (strain 34H / ATCC BAA-681) (Vibrio psychroerythus).